A 451-amino-acid polypeptide reads, in one-letter code: Serine/threonine-protein phosphatase 2A 55 kDa regulatory subunit B delta isoform (451 aa).

7 WD repeats span residues 30–69 (AEAD…KSRP), 95–136 (EIEE…KRAE), 179–217 (AHTY…RSFN), 228–268 (ELTE…LCDR), 287–325 (EIIS…RPVE), 342–383 (ENDC…DITL), and 418–451 (DFNK…DKIN).

Belongs to the phosphatase 2A regulatory subunit B family. PP2A consists of a common heterodimeric core enzyme, composed of a 36 kDa catalytic subunit (subunit C) and a 65 kDa constant regulatory subunit (PR65 or subunit A), that associates with a variety of regulatory subunits.

It localises to the cytoplasm. Functionally, substrate-recognition subunit of protein phosphatase 2A (PP2A) that plays a key role in cell cycle by controlling mitosis entry and exit. The activity of PP2A complexes containing PPP2R2D (PR55-delta) fluctuate during the cell cycle: the activity is high in interphase and low in mitosis. The polypeptide is Serine/threonine-protein phosphatase 2A 55 kDa regulatory subunit B delta isoform (PPP2R2D) (Gallus gallus (Chicken)).